The following is a 722-amino-acid chain: Ras and EF-hand domain-containing protein (722 aa).

2 consecutive EF-hand domains span residues 5-39 (DELS…ELKV) and 39-74 (VSPS…ARGL). Over residues 75-84 (HMPEGKKDVE) the composition is skewed to basic and acidic residues. The disordered stretch occupies residues 75 to 109 (HMPEGKKDVEQGEPPKSPSTPDKEEKPEETSSPAW). The stretch at 156–335 (REIRLQSTEM…ANRKLHDSND (180 aa)) forms a coiled coil. Positions 355 to 374 (INTSPGSTISRNSPKLTRCT) are enriched in polar residues. Disordered stretches follow at residues 355-384 (INTS…PRSS) and 439-491 (FHRS…SGAS). Residues 480–491 (SNPVSRSSSGAS) are compositionally biased toward low complexity. Residues 532–537 (AVGKSS), 635–638 (NKAD), and 672–673 (AK) contribute to the GTP site.

It belongs to the small GTPase superfamily. Rab family. Homodimer.

Its subcellular location is the cytoplasm. It localises to the perinuclear region. Functionally, binds predominantly GDP, and also GTP. This chain is Ras and EF-hand domain-containing protein (rasef), found in Xenopus tropicalis (Western clawed frog).